The sequence spans 175 residues: Succinate dehydrogenase assembly factor 2, mitochondrial (175 aa).

Positions 42-71 are disordered; sequence PFSDPELAHANNSLPSNSEEWPLPEPLDRT. The span at 51–60 shows a compositional bias: polar residues; sequence ANNSLPSNSE.

This sequence belongs to the SDHAF2 family. In terms of assembly, interacts with the flavoprotein subunit within the SDH catalytic dimer.

It localises to the mitochondrion matrix. Its function is as follows. Plays an essential role in the assembly of succinate dehydrogenase (SDH), an enzyme complex (also referred to as respiratory complex II) that is a component of both the tricarboxylic acid (TCA) cycle and the mitochondrial electron transport chain, and which couples the oxidation of succinate to fumarate with the reduction of ubiquinone (coenzyme Q) to ubiquinol. Required for flavinylation (covalent attachment of FAD) of the flavoprotein subunit of the SDH catalytic dimer. This chain is Succinate dehydrogenase assembly factor 2, mitochondrial, found in Cryptococcus neoformans var. neoformans serotype D (strain B-3501A) (Filobasidiella neoformans).